The sequence spans 47 residues: High light-inducible protein HliC (47 aa).

The Cytoplasmic segment spans residues 1-14; it reads MNNENSKFGFTAFA. Positions 15–20 match the Chlorophyll-binding motif motif; that stretch reads ENWNGR. A transmembrane span lies at residues 15-36; it reads ENWNGRLAMIGFSSALILELVS. Topologically, residues 37–47 are lumenal, thylakoid; the sequence is GQGVLHFFGIL.

Belongs to the Hlip family. As to quaternary structure, forms heterodimers with both HliA and HliB; these are associated with photosystem II (PSII) assembly intermediates containing CP47 (psbB). In the absence of CP47 (psbB) and HliD, forms a homooligomer in vivo that binds 2 chlorophyll a and 1 beta-carotenoid per monomer. Cofractionates in an approximately 50 kDa fraction the thylakoid membrane with HliD. Associated in vivo with monomeric PSII. Purified in several chlorophyll- and carotenoid-containing complexes, including photosystem II (PSII) assembly intermediate complex RCII* (iD1, D1, D2, PsbE, PsbF, PsbI, Ycf39, Ycf48, HliC and HliD) and the Ycf39-Hlip complex (Ycf39, HliC, HliD and pigments).

It localises to the cellular thylakoid membrane. Functionally, forms a number of heteromers involved in photosystem II (PSII) assembly and/or repair under high light stress. Required for binding of chlorophyll and carotenoids by the Ycf39-Hlip complex. The Ycf39-Hlip complex binds D1 at an early stage of PSII assembly along with Ycf48, ribosomes and ChlG, the last enzyme in chlorophyll biosynthesis; it may be involved in chlorophyll reuse and delivery to D1 in the initial stages of PSII assembly. HliA-HliC and HliB-HliC heterodimers bind chlorophyll and carotenoids in a 1:0.6 ratio. Complexes bind mostly beta-carotenoid, but minor amounts of echinenone and beta-crytoxanthin are also detected. The complexes efficiently quench chlorophyll fluorescence, contributing to photoprotection. Deletion of 4 to 5 members of the Hlip family suggests the proteins are involved in regulation of chlorophyll biosynthesis, in stabilization of chlorophyll-binding proteins and/or in reuse of chlorophylls, and may regulate tetrapyrrole biosynthesis. Might bind chlorophyll and/or carotenoids in association with HliD (called the ScpBE pair). The Hlips might regulate tetrapyrrole biosynthesis, maybe at the level of aminolevulinic acid synthesis and probably stabilize PSII assembly intermediates. The polypeptide is High light-inducible protein HliC (hliC) (Synechocystis sp. (strain ATCC 27184 / PCC 6803 / Kazusa)).